The following is a 472-amino-acid chain: Endoplasmic reticulum oxidoreductin-2 (472 aa).

The first 37 residues, 1-37 (MAETDVGSVKGKEKGSGKRWILLIGAIAAVLLAVVVA), serve as a signal peptide directing secretion. N-linked (GlcNAc...) asparagine glycosylation is present at Asn-44. 6 disulfide bridges follow: Cys-55-Cys-74, Cys-57-Cys-72, Cys-111-Cys-371, Cys-120-Cys-125, Cys-221-Cys-230, and Cys-374-Cys-377. Residues Arg-200, Thr-202, and Trp-213 each coordinate FAD. FAD-binding residues include Ser-241 and His-244. Residue Asn-267 is glycosylated (N-linked (GlcNAc...) asparagine). Arg-274 and Arg-281 together coordinate FAD. N-linked (GlcNAc...) asparagine glycosylation is present at Asn-364.

It belongs to the EROs family. In terms of assembly, may function both as a monomer and a homodimer. FAD is required as a cofactor. N-glycosylated.

The protein localises to the endoplasmic reticulum membrane. Its function is as follows. Essential oxidoreductase that oxidizes proteins in the endoplasmic reticulum to produce disulfide bonds. Acts by oxidizing directly PDI isomerase through a direct disulfide exchange. Does not act as a direct oxidant of folding substrate, but relies on PDI to transfer oxidizing equivalent. Does not oxidize all PDI related proteins, suggesting that it can discriminate between PDI and related proteins. Its reoxidation probably involves electron transfer to molecular oxygen via FAD. Acts independently of glutathione. May be responsible for a significant proportion of reactive oxygen species (ROS) in the cell, thereby being a source of oxidative stress. The polypeptide is Endoplasmic reticulum oxidoreductin-2 (AERO2) (Arabidopsis thaliana (Mouse-ear cress)).